A 246-amino-acid polypeptide reads, in one-letter code: ATP synthase subunit a, chloroplastic (246 aa).

The next 5 helical transmembrane spans lie at 33-53 (VHGQ…GFGL), 99-119 (TIFL…WALI), 133-153 (INTT…AGIN), 201-221 (GVLV…LGLF), and 222-242 (TSAI…GESL).

It belongs to the ATPase A chain family. F-type ATPases have 2 components, CF(1) - the catalytic core - and CF(0) - the membrane proton channel. CF(1) has five subunits: alpha(3), beta(3), gamma(1), delta(1), epsilon(1). CF(0) has four main subunits: a, b, b' and c.

The protein resides in the plastid. It is found in the chloroplast thylakoid membrane. In terms of biological role, key component of the proton channel; it plays a direct role in the translocation of protons across the membrane. The polypeptide is ATP synthase subunit a, chloroplastic (Oltmannsiellopsis viridis (Marine flagellate)).